Consider the following 215-residue polypeptide: Glycerol-3-phosphate acyltransferase (215 aa).

6 consecutive transmembrane segments (helical) span residues L3–G23, T42–I61, T68–L90, A110–L130, L134–L154, and L162–I182.

It belongs to the PlsY family. As to quaternary structure, probably interacts with PlsX.

It is found in the cell membrane. It catalyses the reaction an acyl phosphate + sn-glycerol 3-phosphate = a 1-acyl-sn-glycero-3-phosphate + phosphate. It participates in lipid metabolism; phospholipid metabolism. Catalyzes the transfer of an acyl group from acyl-phosphate (acyl-PO(4)) to glycerol-3-phosphate (G3P) to form lysophosphatidic acid (LPA). This enzyme utilizes acyl-phosphate as fatty acyl donor, but not acyl-CoA or acyl-ACP. The protein is Glycerol-3-phosphate acyltransferase of Streptococcus equi subsp. zooepidemicus (strain H70).